We begin with the raw amino-acid sequence, 116 residues long: NADH-quinone oxidoreductase subunit A (116 aa).

The next 3 membrane-spanning stretches (helical) occupy residues 3 to 23 (FTLL…VIAL), 61 to 81 (FAIL…WAVI), and 88 to 108 (QGLI…AYAW).

It belongs to the complex I subunit 3 family. NDH-1 is composed of 14 different subunits. Subunits NuoA, H, J, K, L, M, N constitute the membrane sector of the complex.

The protein resides in the cell inner membrane. It carries out the reaction a quinone + NADH + 5 H(+)(in) = a quinol + NAD(+) + 4 H(+)(out). Its function is as follows. NDH-1 shuttles electrons from NADH, via FMN and iron-sulfur (Fe-S) centers, to quinones in the respiratory chain. The immediate electron acceptor for the enzyme in this species is believed to be a menaquinone. Couples the redox reaction to proton translocation (for every two electrons transferred, four hydrogen ions are translocated across the cytoplasmic membrane), and thus conserves the redox energy in a proton gradient. The sequence is that of NADH-quinone oxidoreductase subunit A from Bacteroides fragilis (strain ATCC 25285 / DSM 2151 / CCUG 4856 / JCM 11019 / LMG 10263 / NCTC 9343 / Onslow / VPI 2553 / EN-2).